The primary structure comprises 92 residues: Progonadoliberin-1 (92 aa).

The signal sequence occupies residues 1 to 23; sequence MGLIPKLLAGLVLLTLCVENGSG. A Pyrrolidone carboxylic acid modification is found at Q24. Glycine amide is present on G33.

The protein belongs to the GnRH family. Post-translationally, the precursor is cleaved by ACE, which removes the Gly-Lys-Arg peptide at the C-terminus, leading to mature hormone. The mature form of Gonadoliberin-1 is also cleaved and degraded by ACE.

It localises to the secreted. Its function is as follows. Stimulates the secretion of gonadotropins; it stimulates the secretion of both luteinizing and follicle-stimulating hormones. The protein is Progonadoliberin-1 (GNRH1) of Cavia porcellus (Guinea pig).